Consider the following 128-residue polypeptide: NADPH-dependent 7-cyano-7-deazaguanine reductase (128 aa).

The active-site Thioimide intermediate is Cys-34. Asp-41 acts as the Proton donor in catalysis. Substrate contacts are provided by residues 56–58 and 75–76; these read VEL and HE.

The protein belongs to the GTP cyclohydrolase I family. QueF type 1 subfamily.

It is found in the cytoplasm. It catalyses the reaction 7-aminomethyl-7-carbaguanine + 2 NADP(+) = 7-cyano-7-deazaguanine + 2 NADPH + 3 H(+). It functions in the pathway tRNA modification; tRNA-queuosine biosynthesis. Functionally, catalyzes the NADPH-dependent reduction of 7-cyano-7-deazaguanine (preQ0) to 7-aminomethyl-7-deazaguanine (preQ1). The sequence is that of NADPH-dependent 7-cyano-7-deazaguanine reductase from Thermomicrobium roseum (strain ATCC 27502 / DSM 5159 / P-2).